Reading from the N-terminus, the 866-residue chain is Probable beta-glucosidase F (866 aa).

Positions 1 to 20 are cleaved as a signal peptide; sequence MAAFPAYLALLSYLVPGALS. N-linked (GlcNAc...) asparagine glycans are attached at residues Asn65, Asn73, and Asn257. Asp285 is a catalytic residue. Asn328, Asn360, Asn395, Asn421, Asn474, Asn659, Asn664, and Asn724 each carry an N-linked (GlcNAc...) asparagine glycan. The interval 725 to 748 is disordered; sequence SSKTYPYPDGYTTEPKPAPRAGGA.

It belongs to the glycosyl hydrolase 3 family.

Its subcellular location is the secreted. It catalyses the reaction Hydrolysis of terminal, non-reducing beta-D-glucosyl residues with release of beta-D-glucose.. Its pathway is glycan metabolism; cellulose degradation. In terms of biological role, beta-glucosidases are one of a number of cellulolytic enzymes involved in the degradation of cellulosic biomass. Catalyzes the last step releasing glucose from the inhibitory cellobiose. This Aspergillus flavus (strain ATCC 200026 / FGSC A1120 / IAM 13836 / NRRL 3357 / JCM 12722 / SRRC 167) protein is Probable beta-glucosidase F (bglF).